The sequence spans 109 residues: uncharacterized protein (109 aa).

A run of 2 helical transmembrane segments spans residues 24–44 (SLGI…SAFV) and 68–88 (VIVL…SIFI).

It localises to the membrane. This is an uncharacterized protein from Saccharomyces cerevisiae (strain ATCC 204508 / S288c) (Baker's yeast).